The primary structure comprises 468 residues: Malate-2H(+)/Na(+)-lactate antiporter (468 aa).

The next 12 membrane-spanning stretches (helical) occupy residues 9-29, 30-50, 73-93, 96-116, 136-156, 192-212, 233-253, 258-278, 309-329, 357-377, 405-425, and 428-448; these read LFEIIIVLGVFLALVLSFTVF, LDLPIQLALFVSWFIAMLLGI, AVLILVSVGALIGTWIAGGVV, LIYYGLEFIHPSIFLLATLII, IAMIAIGEGLGIPLPLVAGAI, LYLSIPAYVITAILFTVVGFM, TFDIHIWMLIPAVLVIVLLAM, MPVIVIGALLGAIWAVVFQGM, IVGMLDSLVVIIFGLGFGGLL, LIVAFLANIFGCAMYVSLILT, LTSGMVPWSDNGIYMAGILGV, and FSYLPFMWLSFVAIGLAIIYG.

The protein belongs to the NhaC Na(+)/H(+) (TC 2.A.35) antiporter family.

It is found in the cell membrane. Couples proton uptake and Na(+) efflux to the substrate-product malate/lactate antiport, in an electroneutral malate-2H(+)/Na(+)-lactate exchange. Plays a role in supporting growth to high density on malate at reduced protonmotive force. This is Malate-2H(+)/Na(+)-lactate antiporter (mleN) from Bacillus subtilis (strain 168).